A 101-amino-acid chain; its full sequence is Small ribosomal subunit protein uS14A (101 aa).

Disordered regions lie at residues 1–20 (MAKKSKIAKNDRRQETVARY) and 28–72 (TEII…RPRG). 2 stretches are compositionally biased toward basic and acidic residues: residues 38–53 (EAERRAAQQELRRQPR) and 61–70 (RNRDSVDGRP).

This sequence belongs to the universal ribosomal protein uS14 family. Part of the 30S ribosomal subunit. Contacts proteins S3 and S10.

Its function is as follows. Binds 16S rRNA, required for the assembly of 30S particles and may also be responsible for determining the conformation of the 16S rRNA at the A site. The chain is Small ribosomal subunit protein uS14A from Streptomyces avermitilis (strain ATCC 31267 / DSM 46492 / JCM 5070 / NBRC 14893 / NCIMB 12804 / NRRL 8165 / MA-4680).